The following is a 201-amino-acid chain: Probable nicotinate-nucleotide adenylyltransferase (201 aa).

Belongs to the NadD family.

The enzyme catalyses nicotinate beta-D-ribonucleotide + ATP + H(+) = deamido-NAD(+) + diphosphate. It functions in the pathway cofactor biosynthesis; NAD(+) biosynthesis; deamido-NAD(+) from nicotinate D-ribonucleotide: step 1/1. Catalyzes the reversible adenylation of nicotinate mononucleotide (NaMN) to nicotinic acid adenine dinucleotide (NaAD). The sequence is that of Probable nicotinate-nucleotide adenylyltransferase from Clostridium botulinum (strain ATCC 19397 / Type A).